The primary structure comprises 294 residues: Glutamyl-Q tRNA(Asp) synthetase (294 aa).

L-glutamate contacts are provided by residues Arg-8–Thr-12 and Glu-44. A 'HIGH' region motif is present at residues Pro-11–Ser-21. Zn(2+) is bound by residues Cys-100, Cys-102, Tyr-114, and Cys-118. L-glutamate is bound by residues Tyr-171 and Arg-189. The short motif at Lys-227–Ser-231 is the 'KMSKS' region element. Lys-230 is an ATP binding site.

It belongs to the class-I aminoacyl-tRNA synthetase family. GluQ subfamily. Requires Zn(2+) as cofactor.

Its function is as follows. Catalyzes the tRNA-independent activation of glutamate in presence of ATP and the subsequent transfer of glutamate onto a tRNA(Asp). Glutamate is transferred on the 2-amino-5-(4,5-dihydroxy-2-cyclopenten-1-yl) moiety of the queuosine in the wobble position of the QUC anticodon. The protein is Glutamyl-Q tRNA(Asp) synthetase of Ectopseudomonas mendocina (strain ymp) (Pseudomonas mendocina).